The sequence spans 179 residues: Large ribosomal subunit protein uL5 (179 aa).

The protein belongs to the universal ribosomal protein uL5 family. In terms of assembly, part of the 50S ribosomal subunit; part of the 5S rRNA/L5/L18/L25 subcomplex. Contacts the 5S rRNA and the P site tRNA. Forms a bridge to the 30S subunit in the 70S ribosome.

This is one of the proteins that bind and probably mediate the attachment of the 5S RNA into the large ribosomal subunit, where it forms part of the central protuberance. In the 70S ribosome it contacts protein S13 of the 30S subunit (bridge B1b), connecting the 2 subunits; this bridge is implicated in subunit movement. Contacts the P site tRNA; the 5S rRNA and some of its associated proteins might help stabilize positioning of ribosome-bound tRNAs. This Vibrio vulnificus (strain CMCP6) protein is Large ribosomal subunit protein uL5.